A 561-amino-acid chain; its full sequence is MACPF domain-containing protein CAD1 (561 aa).

An MACPF domain is found at 11–314; the sequence is VPSSEALTTT…PPIEDLQYFL (304 aa). The interval 489–514 is disordered; the sequence is VASSGRLEPGGPSTSSSTEEVSGQSG. The span at 500–513 shows a compositional bias: polar residues; it reads PSTSSSTEEVSGQS.

It belongs to the complement C6/C7/C8/C9 (TC 1.C.39) family. In terms of tissue distribution, mainly expressed in the vascular system.

Its function is as follows. Negatively controls the salicylic acid (SA)-mediated pathway of programmed cell death in plant immunity. This chain is MACPF domain-containing protein CAD1 (CAD1), found in Arabidopsis thaliana (Mouse-ear cress).